Reading from the N-terminus, the 116-residue chain is Galanin-like peptide (116 aa).

Residues 1 to 24 (MAPPSVPLVLLLVLLLSLAETPAS) form the signal peptide. Positions 87–116 (NVMETFAKPEIGDLGMLSMKIPKEEDVLKS) are excised as a propeptide.

This sequence belongs to the galanin family. As to expression, isoform 2 is found in ganglia of ganglioneuroma and ganglioneuroblastoma, as well as in differentiated tumor cells of neuroblastoma tissues. Not found in undifferentiated neuroblasts. Isoform 2 is found in the skin, in pericytes covering microvascular arterioles and venules on their abluminal surfaces. In larger vessels, isoform 2 is expressed in layers of smooth muscle cells. Isoform 2 is not detected in endothelial cells.

Its subcellular location is the secreted. In terms of biological role, hypothalamic neuropeptide which binds to the G-protein-coupled galanin receptors (GALR1, GALR2 and GALR3). Involved in a large number of putative physiological functions in CNS homeostatic processes, including the regulation of gonadotropin-releasing hormone secretion. Functionally, exhibits potent and dose-dependent vasoconstrictor and anti-edema activity in the cutaneous microvasculature, a physiologic effects which does not appear to be mediated via GALR1 or GALR2. Exhibits antimicrobial activity against Gram-negative bacterias, inducing bacterial membrane blebbing. The protein is Galanin-like peptide (GALP) of Homo sapiens (Human).